Consider the following 228-residue polypeptide: Carboxy-S-adenosyl-L-methionine synthase (228 aa).

S-adenosyl-L-methionine contacts are provided by residues Tyr30, 55 to 57 (GSS), 79 to 80 (DN), and 103 to 104 (DV).

It belongs to the class I-like SAM-binding methyltransferase superfamily. Cx-SAM synthase family.

The catalysed reaction is prephenate + S-adenosyl-L-methionine = carboxy-S-adenosyl-L-methionine + 3-phenylpyruvate + H2O. Its function is as follows. Catalyzes the conversion of S-adenosyl-L-methionine (SAM) to carboxy-S-adenosyl-L-methionine (Cx-SAM). The chain is Carboxy-S-adenosyl-L-methionine synthase from Staphylococcus epidermidis (strain ATCC 35984 / DSM 28319 / BCRC 17069 / CCUG 31568 / BM 3577 / RP62A).